The primary structure comprises 954 residues: Major inner capsid protein VP2 (954 aa).

Residues 1-15 (MPRKKEQASKSENEK) show a composition bias toward basic and acidic residues. The tract at residues 1–29 (MPRKKEQASKSENEKQTSNVQAQDFKTAI) is disordered. Over residues 16 to 29 (QTSNVQAQDFKTAI) the composition is skewed to polar residues.

The protein resides in the virion. Functionally, self-assembles to form an icosahedral capsid with a pseudo T=2 symmetry, about 60 nm in diameter, and consisting of 120 VP2 subunits. The polypeptide is Major inner capsid protein VP2 (Segment-2) (Banna virus (BAV)).